A 228-amino-acid polypeptide reads, in one-letter code: 5'-methylthioadenosine/S-adenosylhomocysteine nucleosidase (228 aa).

Glu11 acts as the Proton acceptor in catalysis. Substrate contacts are provided by residues Gly77, Ile151, and 172 to 173 (ME). Residue Asp196 is the Proton donor of the active site.

It belongs to the PNP/UDP phosphorylase family. MtnN subfamily.

The catalysed reaction is S-adenosyl-L-homocysteine + H2O = S-(5-deoxy-D-ribos-5-yl)-L-homocysteine + adenine. It carries out the reaction S-methyl-5'-thioadenosine + H2O = 5-(methylsulfanyl)-D-ribose + adenine. It catalyses the reaction 5'-deoxyadenosine + H2O = 5-deoxy-D-ribose + adenine. The protein operates within amino-acid biosynthesis; L-methionine biosynthesis via salvage pathway; S-methyl-5-thio-alpha-D-ribose 1-phosphate from S-methyl-5'-thioadenosine (hydrolase route): step 1/2. Its function is as follows. Catalyzes the irreversible cleavage of the glycosidic bond in both 5'-methylthioadenosine (MTA) and S-adenosylhomocysteine (SAH/AdoHcy) to adenine and the corresponding thioribose, 5'-methylthioribose and S-ribosylhomocysteine, respectively. Also cleaves 5'-deoxyadenosine, a toxic by-product of radical S-adenosylmethionine (SAM) enzymes, into 5-deoxyribose and adenine. The chain is 5'-methylthioadenosine/S-adenosylhomocysteine nucleosidase from Staphylococcus saprophyticus subsp. saprophyticus (strain ATCC 15305 / DSM 20229 / NCIMB 8711 / NCTC 7292 / S-41).